We begin with the raw amino-acid sequence, 431 residues long: Ribosomal RNA small subunit methyltransferase B (431 aa).

Residues 254-260 (CAAPGGK), D277, D303, and D322 each bind S-adenosyl-L-methionine. C375 functions as the Nucleophile in the catalytic mechanism. A disordered region spans residues 398 to 417 (LHATGTPASPGQQNLPGPEE). Polar residues predominate over residues 403–412 (TPASPGQQNL).

Belongs to the class I-like SAM-binding methyltransferase superfamily. RsmB/NOP family.

It localises to the cytoplasm. The catalysed reaction is cytidine(967) in 16S rRNA + S-adenosyl-L-methionine = 5-methylcytidine(967) in 16S rRNA + S-adenosyl-L-homocysteine + H(+). In terms of biological role, specifically methylates the cytosine at position 967 (m5C967) of 16S rRNA. In Klebsiella pneumoniae (strain 342), this protein is Ribosomal RNA small subunit methyltransferase B.